A 314-amino-acid polypeptide reads, in one-letter code: PDZ domain-containing protein GIPC2 (314 aa).

The span at 1–12 (MPLGLRGKKKAA) shows a compositional bias: basic residues. Residues 1-36 (MPLGLRGKKKAAKSKEAARLVEGERSSGSQGVPGPP) are disordered. Over residues 13 to 25 (KSKEAARLVEGER) the composition is skewed to basic and acidic residues. In terms of domain architecture, PDZ spans 117–197 (EVNVYKSEDS…EELFTLQLIE (81 aa)).

The protein belongs to the GIPC family. In terms of assembly, probably interacts with SEMA5A. As to expression, expressed in kidney and lung (at protein level).

The protein localises to the cytoplasm. This chain is PDZ domain-containing protein GIPC2 (Gipc2), found in Mus musculus (Mouse).